Here is a 1312-residue protein sequence, read N- to C-terminus: Kinesin-like protein KIF16B (1312 aa).

One can recognise a Kinesin motor domain in the interval 3-358 (SVKVAVRVRP…LRYANRAKNI (356 aa)). 102-109 (GQTGSGKS) lines the ATP pocket. Positions 366-425 (EDANVKLIRELRAEIARLKTLLAQGNQIALLDSPTALSMEEKLHQNEARVQELTKEWTNK) form a coiled coil. The residue at position 398 (S398) is a Phosphoserine. The region spanning 480 to 544 (VGREDASTEQ…LNQGAVILLG (65 aa)) is the FHA domain. T577 bears the Phosphothreonine mark. Phosphoserine is present on residues S582, S838, S1047, and S1145. 2 coiled-coil regions span residues 835–913 (KLAS…LQNH) and 941–1073 (QVEK…KQKI). Residues 1177 to 1291 (DPIKISIPRY…KVGLTLSKHT (115 aa)) form the PX domain.

This sequence belongs to the TRAFAC class myosin-kinesin ATPase superfamily. Kinesin family. Interacts with PTPN21. Interacts with RAB14.

The protein resides in the cytoplasm. It is found in the cytoskeleton. The protein localises to the early endosome membrane. It localises to the spindle. In terms of biological role, plus end-directed microtubule-dependent motor protein involved in endosome transport and receptor recycling and degradation. Regulates the plus end motility of early endosomes and the balance between recycling and degradation of receptors such as EGF receptor (EGFR) and FGF receptor (FGFR). Regulates the Golgi to endosome transport of FGFR-containing vesicles during early development, a key process for developing basement membrane and epiblast and primitive endoderm lineages during early postimplantation development. This is Kinesin-like protein KIF16B (Kif16b) from Mus musculus (Mouse).